The primary structure comprises 487 residues: Aromatic-L-amino-acid decarboxylase (487 aa).

M1 bears the N-acetylmethionine mark. 2 repeat units span residues 58–115 (EDIE…TELE) and 118–178 (MMDW…MQAA). The tract at residues 58–178 (EDIEKIIMPG…AASPELMQAA (121 aa)) is 2 X approximate tandem repeats. Substrate is bound at residue T82. Pyridoxal 5'-phosphate contacts are provided by A148 and S149. H192 provides a ligand contact to substrate. Pyridoxal 5'-phosphate is bound by residues T246 and N300. K303 bears the N6-(pyridoxal phosphate)lysine mark.

The protein belongs to the group II decarboxylase family. Homodimer. Requires pyridoxal 5'-phosphate as cofactor.

The catalysed reaction is L-dopa + H(+) = dopamine + CO2. It catalyses the reaction 5-hydroxy-L-tryptophan + H(+) = serotonin + CO2. The protein operates within catecholamine biosynthesis; dopamine biosynthesis; dopamine from L-tyrosine: step 2/2. Functionally, catalyzes the decarboxylation of L-3,4-dihydroxyphenylalanine (DOPA) to dopamine and L-5-hydroxytryptophan to serotonin. The protein is Aromatic-L-amino-acid decarboxylase (DDC) of Bos taurus (Bovine).